The primary structure comprises 358 residues: Transcription factor PCF6 (358 aa).

The segment at 1–29 is disordered; it reads MEAAVGDGEGGGGGGGRGKRGRGGGGGEM. The span at 7–16 shows a compositional bias: gly residues; sequence DGEGGGGGGG. Residues 52-110 form the TCP domain; sequence GKDRHSKVYTAKGIRDRRVRLSVATAIQFYDLQDRLGFDQPSKAIEWLINAASPAIDTL. Disordered regions lie at residues 127 to 163 and 282 to 308; these read ADAA…DKEV and ANRG…QQLQ. Polar residues-rich tracts occupy residues 143 to 156 and 285 to 296; these read LSNK…SETS and GTLQSNSPSNMS.

Forms homodimers and heterodimers.

Its subcellular location is the nucleus. Transcription activator. Binds the promoter core sequence 5'-GGNCC-3'. The sequence is that of Transcription factor PCF6 (PCF6) from Oryza sativa subsp. indica (Rice).